The sequence spans 193 residues: Cysteine and glycine-rich protein 1 (193 aa).

An LIM zinc-binding 1 domain is found at 10–61 (CGVCQKTVYFAEEVQCEGNSFHKSCFLCMVCKKNLDSTTVAVHGEEIYCKSC). Residues 64–69 (KKYGPK) carry the Nuclear localization signal motif. Ser81 is modified (phosphoserine). N6-acetyllysine is present on Lys84. Lys91 is covalently cross-linked (Glycyl lysine isopeptide (Lys-Gly) (interchain with G-Cter in SUMO2)). An N6-acetyllysine mark is found at Lys112, Lys131, Lys137, and Lys161. The 52-residue stretch at 119–170 (CPRCSQAVYAAEKVIGAGKSWHKSCFRCAKCGKGLESTTLADKDGEIYCKGC) folds into the LIM zinc-binding 2 domain. Ser192 bears the Phosphoserine mark.

In terms of assembly, interacts with ASCC1; ASCC2 and TRIP4.

The protein resides in the nucleus. Functionally, could play a role in neuronal development. This chain is Cysteine and glycine-rich protein 1 (Csrp1), found in Rattus norvegicus (Rat).